A 247-amino-acid polypeptide reads, in one-letter code: Phosphoribosylaminoimidazole-succinocarboxamide synthase (247 aa).

Belongs to the SAICAR synthetase family.

It catalyses the reaction 5-amino-1-(5-phospho-D-ribosyl)imidazole-4-carboxylate + L-aspartate + ATP = (2S)-2-[5-amino-1-(5-phospho-beta-D-ribosyl)imidazole-4-carboxamido]succinate + ADP + phosphate + 2 H(+). It functions in the pathway purine metabolism; IMP biosynthesis via de novo pathway; 5-amino-1-(5-phospho-D-ribosyl)imidazole-4-carboxamide from 5-amino-1-(5-phospho-D-ribosyl)imidazole-4-carboxylate: step 1/2. This chain is Phosphoribosylaminoimidazole-succinocarboxamide synthase, found in Gloeobacter violaceus (strain ATCC 29082 / PCC 7421).